A 294-amino-acid chain; its full sequence is Cytidine deaminase (294 aa).

CMP/dCMP-type deaminase domains are found at residues 48–168 (DEDA…FGPK) and 186–294 (LTGD…VLLA). Substrate is bound at residue 89–91 (NME). Position 102 (His102) interacts with Zn(2+). The active-site Proton donor is Glu104. Positions 129 and 132 each coordinate Zn(2+).

It belongs to the cytidine and deoxycytidylate deaminase family. Homodimer. The cofactor is Zn(2+).

It catalyses the reaction cytidine + H2O + H(+) = uridine + NH4(+). The enzyme catalyses 2'-deoxycytidine + H2O + H(+) = 2'-deoxyuridine + NH4(+). Its function is as follows. This enzyme scavenges exogenous and endogenous cytidine and 2'-deoxycytidine for UMP synthesis. This is Cytidine deaminase from Escherichia coli O139:H28 (strain E24377A / ETEC).